A 107-amino-acid polypeptide reads, in one-letter code: Late histone H2B.L4 (107 aa).

S94 is a glycosylation site (O-linked (GlcNAc) serine). K102 participates in a covalent cross-link: Glycyl lysine isopeptide (Lys-Gly) (interchain with G-Cter in ubiquitin).

Belongs to the histone H2B family. As to quaternary structure, the nucleosome is a histone octamer containing two molecules each of H2A, H2B, H3 and H4 assembled in one H3-H4 heterotetramer and two H2A-H2B heterodimers. The octamer wraps approximately 147 bp of DNA. Post-translationally, monoubiquitination gives a specific tag for epigenetic transcriptional activation and is also prerequisite for histone H3 'Lys-4' and 'Lys-79' methylation. GlcNAcylation at Ser-94 promotes monoubiquitination of Lys-102. It fluctuates in response to extracellular glucose, and associates with transcribed genes.

It localises to the nucleus. The protein localises to the chromosome. Its function is as follows. Core component of nucleosome. Nucleosomes wrap and compact DNA into chromatin, limiting DNA accessibility to the cellular machineries which require DNA as a template. Histones thereby play a central role in transcription regulation, DNA repair, DNA replication and chromosomal stability. DNA accessibility is regulated via a complex set of post-translational modifications of histones, also called histone code, and nucleosome remodeling. The protein is Late histone H2B.L4 of Strongylocentrotus purpuratus (Purple sea urchin).